The primary structure comprises 229 residues: Deoxyribose-phosphate aldolase (229 aa).

The Proton donor/acceptor role is filled by Asp84. The active-site Schiff-base intermediate with acetaldehyde is Lys146. Catalysis depends on Lys188, which acts as the Proton donor/acceptor.

The protein belongs to the DeoC/FbaB aldolase family. DeoC type 1 subfamily.

It is found in the cytoplasm. The catalysed reaction is 2-deoxy-D-ribose 5-phosphate = D-glyceraldehyde 3-phosphate + acetaldehyde. It functions in the pathway carbohydrate degradation; 2-deoxy-D-ribose 1-phosphate degradation; D-glyceraldehyde 3-phosphate and acetaldehyde from 2-deoxy-alpha-D-ribose 1-phosphate: step 2/2. Functionally, catalyzes a reversible aldol reaction between acetaldehyde and D-glyceraldehyde 3-phosphate to generate 2-deoxy-D-ribose 5-phosphate. This chain is Deoxyribose-phosphate aldolase, found in Pyrobaculum neutrophilum (strain DSM 2338 / JCM 9278 / NBRC 100436 / V24Sta) (Thermoproteus neutrophilus).